The following is an 892-amino-acid chain: Protein RRP6-like 3 (892 aa).

Positions 119–287 (YVWVETESQL…IADSLTTELK (169 aa)) constitute a 3'-5' exonuclease domain. Residues 350–436 (SLNAEELVRK…CSHLDDIYKM (87 aa)) form the HRDC domain. The interval 785 to 811 (VDDSGDGTSEGDGAKELNDTQCNGNTL) is disordered.

The protein resides in the cytoplasm. Its subcellular location is the cytosol. The chain is Protein RRP6-like 3 from Arabidopsis thaliana (Mouse-ear cress).